Here is a 600-residue protein sequence, read N- to C-terminus: Elongation factor 4 (600 aa).

Residues 5-187 (SRIRNFSIIA…DLIKKIPPPK (183 aa)) form the tr-type G domain. GTP-binding positions include 17 to 22 (DHGKST) and 134 to 137 (NKMD).

This sequence belongs to the TRAFAC class translation factor GTPase superfamily. Classic translation factor GTPase family. LepA subfamily.

Its subcellular location is the cell inner membrane. It carries out the reaction GTP + H2O = GDP + phosphate + H(+). In terms of biological role, required for accurate and efficient protein synthesis under certain stress conditions. May act as a fidelity factor of the translation reaction, by catalyzing a one-codon backward translocation of tRNAs on improperly translocated ribosomes. Back-translocation proceeds from a post-translocation (POST) complex to a pre-translocation (PRE) complex, thus giving elongation factor G a second chance to translocate the tRNAs correctly. Binds to ribosomes in a GTP-dependent manner. The sequence is that of Elongation factor 4 from Marinobacter nauticus (strain ATCC 700491 / DSM 11845 / VT8) (Marinobacter aquaeolei).